Consider the following 362-residue polypeptide: Alpha-glucoside transport ATP-binding protein AglK (362 aa).

One can recognise an ABC transporter domain in the interval 4–235 (LLLKDIRKSY…PANLFVARFI (232 aa)). Position 36 to 43 (36 to 43 (GPSGCGKS)) interacts with ATP.

The protein belongs to the ABC transporter superfamily.

The protein resides in the cell inner membrane. In terms of biological role, part of the binding-protein-dependent transport system for alpha-glucosides such as sucrose, maltose and trehalose. Probably responsible for energy coupling to the transport system. This chain is Alpha-glucoside transport ATP-binding protein AglK (aglK), found in Rhizobium meliloti (strain 1021) (Ensifer meliloti).